The chain runs to 403 residues: Ribosomal RNA large subunit methyltransferase I (403 aa).

Residues 9 to 88 (YPRLVLSKGR…ESIDIAFFTR (80 aa)) form the PUA domain.

This sequence belongs to the methyltransferase superfamily. RlmI family.

The protein resides in the cytoplasm. The enzyme catalyses cytidine(1962) in 23S rRNA + S-adenosyl-L-methionine = 5-methylcytidine(1962) in 23S rRNA + S-adenosyl-L-homocysteine + H(+). Specifically methylates the cytosine at position 1962 (m5C1962) of 23S rRNA. In Salmonella newport (strain SL254), this protein is Ribosomal RNA large subunit methyltransferase I.